The sequence spans 146 residues: Angiogenin (146 aa).

A signal peptide spans 1–24; the sequence is MVMGPHLLLLVFILGLGLTPPTLA. Gln25 bears the Pyrrolidone carboxylic acid mark. His37 serves as the catalytic Proton acceptor. 3 cysteine pairs are disulfide-bonded: Cys50/Cys105, Cys63/Cys116, and Cys81/Cys131. The short motif at 55 to 59 is the Nucleolar localization signal element; it reads RLRNM. 2 residues coordinate tRNA: Cys105 and Ile127. His138 serves as the catalytic Proton donor.

This sequence belongs to the pancreatic ribonuclease family. As to quaternary structure, homodimer. Interacts with RNH1; inhibiting ANG ribonuclease activity. Interacts with PCNA.

The protein localises to the secreted. It is found in the nucleus. The protein resides in the nucleolus. It localises to the cytoplasm. Its subcellular location is the stress granule. Has weak tRNA ribonuclease activity by itself due to partial autoinhibition by its C-terminus, which folds into a short alpha-helix that partially occludes the substrate-binding site. In absence of stress, the ribonuclease activity is inhibited by RNH1 in the cytoplasm. In response to stress, dissociates from RNH1 in the cytoplasm and associates with cytoplasmic ribosomes with vacant A-sites: ribosomes directly activate the tRNA ribonuclease activity of ANG by refolding the C-terminal alpha-helix. In response to stress, the angiogenic activity of ANG is inhibited by RNH1 in the nucleus. In terms of biological role, secreted ribonuclease that can either promote or restrict cell proliferation of target cells, depending on the context. Endocytosed in target cells via its receptor PLXNB2 and translocates to the cytoplasm or nucleus. Under stress conditions, localizes to the cytoplasm and promotes the assembly of stress granules (SGs): specifically cleaves a subset of tRNAs within anticodon loops to produce tRNA-derived stress-induced fragments (tiRNAs), resulting in translation repression and inhibition of cell proliferation. tiRNas also prevent formation of apoptosome, thereby promoting cell survival. Preferentially cleaves RNAs between a pyrimidine and an adenosine residue, suggesting that it cleaves the anticodon loop of tRNA(Ala) (32-UUAGCAU-38) after positions 33 and 36. Cleaves a subset of tRNAs, including tRNA(Ala), tRNA(Glu), tRNA(Gly), tRNA(Lys), tRNA(Val), tRNA(His), tRNA(Asp) and tRNA(Sec). Under growth conditions and in differentiated cells, translocates to the nucleus and stimulates ribosomal RNA (rRNA) transcription, including that containing the initiation site sequences of 45S rRNA, thereby promoting cell growth and proliferation. Angiogenin induces vascularization of normal and malignant tissues via its ability to promote rRNA transcription. Involved in hematopoietic stem and progenitor cell (HSPC) growth and survival by promoting rRNA transcription in growth conditions and inhibiting translation in response to stress, respectively. Mediates the crosstalk between myeloid and intestinal epithelial cells to protect the intestinal epithelial barrier integrity: secreted by myeloid cells and promotes intestinal epithelial cells proliferation and survival. Also mediates osteoclast-endothelial cell crosstalk in growing bone: produced by osteoclasts and protects the neighboring vascular cells against senescence by promoting rRNA transcription. The sequence is that of Angiogenin (ANG) from Saimiri sciureus (Common squirrel monkey).